The chain runs to 156 residues: Snaclec alboaggregin-B subunit alpha (156 aa).

The signal sequence occupies residues 1-23 (MGRFIFVSFGLLVVFLSLSGTGA). The 128-residue stretch at 24-151 (DCPSDWSSFK…CEQKHIFMCK (128 aa)) folds into the C-type lectin domain. 3 cysteine pairs are disulfide-bonded: Cys25–Cys36, Cys53–Cys150, and Cys125–Cys142.

This sequence belongs to the snaclec family. In terms of assembly, heterodimer of subunits alpha and beta; disulfide-linked. As to expression, expressed by the venom gland.

The protein localises to the secreted. In terms of biological role, weakly agglutinates platelets at high doses by binding to GPIbalpha (GP1BA). The protein is Snaclec alboaggregin-B subunit alpha of Trimeresurus albolabris (White-lipped pit viper).